The chain runs to 1054 residues: NACHT, LRR and PYD domains-containing protein 12 (1054 aa).

The Pyrin domain occupies 1–95 (MLPSTARDGL…WERGQGEDLV (95 aa)). The FISNA domain maps to 129–201 (YKDYVRRKFQ…SPIQMETLFE (73 aa)). Positions 211–528 (HTVVLQGAAG…EFFAAMYCAL (318 aa)) constitute an NACHT domain. 217–224 (GAAGMGKS) lines the ATP pocket. LRR repeat units lie at residues 821–841 (YLVE…KLLC), 850–871 (RLRT…DLAS), 878–899 (SLLE…LLCE), 907–928 (KLQT…GIAS), 935–955 (CLQE…QLLG), 964–985 (RLQK…DLSS), 992–1013 (TLHE…LLCK), and 1021–1042 (KLRV…RMAA).

This sequence belongs to the NLRP family. Interacts (via pyrin domain) with ASC. Interacts (via pyrin domain) with FAF1 (via UBA domain). Interacts with MAP3K14; this interaction promotes proteasomal degradation of MAP3K14. Interacts with NOD2; this interaction promotes degradation of NOD2 through the ubiquitin-proteasome pathway. Interacts with HSPA1A and HSPA8. Interacts with HSP90AA1. Interacts with TRIM25; this interaction inhibits RIGI-mediated signaling pathway. In terms of tissue distribution, mainly expressed in dendritic cells (DCs) and neutrophils.

The protein resides in the cytoplasm. In terms of biological role, plays an essential role as an potent mitigator of inflammation. Primarily expressed in dendritic cells and macrophages, inhibits both canonical and non-canonical NF-kappa-B and ERK activation pathways. Functions as a negative regulator of NOD2 by targeting it to degradation via the proteasome pathway. In turn, promotes bacterial tolerance. Also inhibits the RIGI-mediated immune signaling against RNA viruses by reducing the E3 ubiquitin ligase TRIM25-mediated 'Lys-63'-linked RIGI activation but enhancing the E3 ubiquitin ligase RNF125-mediated 'Lys-48'-linked RIGI degradation. Also acts as a negative regulator of inflammatory response to mitigate obesity and obesity-associated diseases in adipose tissue. The chain is NACHT, LRR and PYD domains-containing protein 12 (Nlrp12) from Mus musculus (Mouse).